Reading from the N-terminus, the 542-residue chain is Chaperonin GroEL 2 (542 aa).

Residues 30–33, K51, 87–91, G415, and D495 contribute to the ATP site; these read TLGP and DGTTT.

This sequence belongs to the chaperonin (HSP60) family. Forms a cylinder of 14 subunits composed of two heptameric rings stacked back-to-back. Interacts with the co-chaperonin GroES.

Its subcellular location is the cytoplasm. The enzyme catalyses ATP + H2O + a folded polypeptide = ADP + phosphate + an unfolded polypeptide.. Together with its co-chaperonin GroES, plays an essential role in assisting protein folding. The GroEL-GroES system forms a nano-cage that allows encapsulation of the non-native substrate proteins and provides a physical environment optimized to promote and accelerate protein folding. In Methylococcus capsulatus (strain ATCC 33009 / NCIMB 11132 / Bath), this protein is Chaperonin GroEL 2.